The primary structure comprises 161 residues: MAQTTTLILLLATLLVAATTVSGQGPHIPLAPSPSVNEAMNCAAGLAVCLPAITQRGPPSQECCTAVETALTTQLSCLCGFIKSPMLLIPFNVTDFNALFSKTCGLTTDPNLCSETAAQAPLPKTAAPVPGAPKSDKDAASKLAGTGLVGIVVITIAAMFY.

The first 23 residues, 1-23, serve as a signal peptide directing secretion; the sequence is MAQTTTLILLLATLLVAATTVSG. Cystine bridges form between Cys42–Cys79, Cys49–Cys63, Cys64–Cys104, and Cys77–Cys113. Asn92 is a glycosylation site (N-linked (GlcNAc...) asparagine). The GPI-anchor amidated aspartate moiety is linked to residue Asp138. Residues 139 to 161 constitute a propeptide, removed in mature form; it reads AASKLAGTGLVGIVVITIAAMFY.

Belongs to the plant LTP family.

Its subcellular location is the cell membrane. Probable lipid transfer protein. The polypeptide is Non-specific lipid transfer protein GPI-anchored 24 (Arabidopsis thaliana (Mouse-ear cress)).